The sequence spans 206 residues: Small ribosomal subunit protein uS4 (206 aa).

Residues 96–158 (GRLDNVVYRM…AKQQTRIKAA (63 aa)) form the S4 RNA-binding domain.

Belongs to the universal ribosomal protein uS4 family. As to quaternary structure, part of the 30S ribosomal subunit. Contacts protein S5. The interaction surface between S4 and S5 is involved in control of translational fidelity.

In terms of biological role, one of the primary rRNA binding proteins, it binds directly to 16S rRNA where it nucleates assembly of the body of the 30S subunit. With S5 and S12 plays an important role in translational accuracy. This chain is Small ribosomal subunit protein uS4, found in Vibrio vulnificus (strain CMCP6).